The following is a 60-amino-acid chain: Serum basic protease inhibitor (60 aa).

The 51-residue stretch at 7 to 57 (CLEPPYTGPCKAAMIRYFYNAKAGFCETFVYGGCRAKSNNFKSAEDCMRTC) folds into the BPTI/Kunitz inhibitor domain. Disulfide bonds link cysteine 7/cysteine 57, cysteine 16/cysteine 40, and cysteine 32/cysteine 53.

The protein resides in the secreted. Functionally, this inhibitor has activity very similar to that of the basic protease inhibitor from bovine tissues. The polypeptide is Serum basic protease inhibitor (Bos taurus (Bovine)).